The primary structure comprises 248 residues: MTLHEVPTILHRCGDCPIRHRAVCARCDSEELATLEQIKYYRSYQAGQTVIWSGDKMDFVASVVTGIATLTQTMEDGRRQMVGLLLPSDFVGRPGRQTVAYDVTATTDLLMCCFRRKPFEEMMQKTPHVGQRLLEMTLDELDAAREWMLLLGRKTAREKIASLLAIIARRDAALKLRESNGPMTFDLPLTREEMADYLGLTLETVSRQVSALKRDGVIALEGKRHVIVTDFARLLEEAGDDSDGGLPV.

Residues 154-232 (KTAREKIASL…KRHVIVTDFA (79 aa)) enclose the HTH crp-type domain. A DNA-binding region (H-T-H motif) is located at residues 191–210 (REEMADYLGLTLETVSRQVS).

Functionally, anaerobic regulatory protein; transcriptional activator of hemA. Appears to regulate other genes. This is Transcriptional activator protein FnrL (fnrL) from Cereibacter sphaeroides (strain ATCC 17023 / DSM 158 / JCM 6121 / CCUG 31486 / LMG 2827 / NBRC 12203 / NCIMB 8253 / ATH 2.4.1.) (Rhodobacter sphaeroides).